Here is a 69-residue protein sequence, read N- to C-terminus: Guanine nucleotide-binding protein G(I)/G(S)/G(O) subunit gamma-T2 (69 aa).

C66 carries the post-translational modification Cysteine methyl ester. A lipid anchor (S-farnesyl cysteine) is attached at C66. Residues 67–69 (VLS) constitute a propeptide, removed in mature form.

The protein belongs to the G protein gamma family. As to quaternary structure, g proteins are composed of 3 units, alpha, beta and gamma.

It localises to the cell membrane. Its function is as follows. Guanine nucleotide-binding proteins (G proteins) are involved as a modulator or transducer in various transmembrane signaling systems. The beta and gamma chains are required for the GTPase activity, for replacement of GDP by GTP, and for G protein-effector interaction. The polypeptide is Guanine nucleotide-binding protein G(I)/G(S)/G(O) subunit gamma-T2 (Gngt2) (Mus musculus (Mouse)).